The sequence spans 681 residues: DNA ligase (681 aa).

NAD(+) contacts are provided by residues 45–49, 94–95, and Glu-120; these read DFDFD and SL. Catalysis depends on Lys-122, which acts as the N6-AMP-lysine intermediate. NAD(+) contacts are provided by Arg-143, Glu-177, Lys-289, and Lys-313. Cys-403, Cys-406, Cys-421, and Cys-426 together coordinate Zn(2+). Residues 593 to 681 form the BRCT domain; the sequence is SDQQPFAGQS…SLKINFKNTI (89 aa).

The protein belongs to the NAD-dependent DNA ligase family. LigA subfamily. Mg(2+) serves as cofactor. It depends on Mn(2+) as a cofactor.

It catalyses the reaction NAD(+) + (deoxyribonucleotide)n-3'-hydroxyl + 5'-phospho-(deoxyribonucleotide)m = (deoxyribonucleotide)n+m + AMP + beta-nicotinamide D-nucleotide.. Functionally, DNA ligase that catalyzes the formation of phosphodiester linkages between 5'-phosphoryl and 3'-hydroxyl groups in double-stranded DNA using NAD as a coenzyme and as the energy source for the reaction. It is essential for DNA replication and repair of damaged DNA. This Leptospira borgpetersenii serovar Hardjo-bovis (strain JB197) protein is DNA ligase.